The chain runs to 130 residues: Small ribosomal subunit protein uS9 (130 aa).

It belongs to the universal ribosomal protein uS9 family.

The protein is Small ribosomal subunit protein uS9 of Brevibacillus brevis (strain 47 / JCM 6285 / NBRC 100599).